Consider the following 622-residue polypeptide: Mitochondrial distribution and morphology protein 34 (622 aa).

The region spanning 1 to 204 (MSFKVNWNSL…LPTLIHQLSL (204 aa)) is the SMP-LTD domain. 3 disordered regions span residues 364–393 (YSNK…DNTV), 442–468 (LETM…RAYQ), and 572–592 (LDGG…NFRP). The span at 372-385 (KPKRRRIKVHKKSK) shows a compositional bias: basic residues. Low complexity predominate over residues 446–455 (STGSSSSASS). Positions 577–587 (NSANTNNSSGG) are enriched in polar residues.

This sequence belongs to the MDM34 family. As to quaternary structure, component of the ER-mitochondria encounter structure (ERMES) or MDM complex, composed of MMM1, MDM10, MDM12 and MDM34.

It is found in the mitochondrion outer membrane. Component of the ERMES/MDM complex, which serves as a molecular tether to connect the endoplasmic reticulum (ER) and mitochondria. Components of this complex are involved in the control of mitochondrial shape and protein biogenesis, and function in nonvesicular lipid trafficking between the ER and mitochondria. MDM34 is required for the interaction of the ER-resident membrane protein MMM1 and the outer mitochondrial membrane-resident beta-barrel protein MDM10. This is Mitochondrial distribution and morphology protein 34 from Candida albicans (strain WO-1) (Yeast).